The following is a 302-amino-acid chain: Urease accessory protein UreD 2 (302 aa).

It belongs to the UreD family. As to quaternary structure, ureD, UreF and UreG form a complex that acts as a GTP-hydrolysis-dependent molecular chaperone, activating the urease apoprotein by helping to assemble the nickel containing metallocenter of UreC. The UreE protein probably delivers the nickel.

It is found in the cytoplasm. Functionally, required for maturation of urease via the functional incorporation of the urease nickel metallocenter. The protein is Urease accessory protein UreD 2 of Brucella melitensis biotype 1 (strain ATCC 23456 / CCUG 17765 / NCTC 10094 / 16M).